Reading from the N-terminus, the 439-residue chain is Glycosyl hydrolase DigH (439 aa).

An N-terminal signal peptide occupies residues 1-27 (MDICSRNKKLTIRRPAILVALALLLCS). C28 carries the N-palmitoyl cysteine lipid modification. C28 carries the S-diacylglycerol cysteine lipid modification. A disordered region spans residues 34-54 (ESMVTPPAGSKPPATTQQSSQ).

It belongs to the glycosyl hydrolase-like 10 (GHL10) family.

The protein resides in the cell outer membrane. In terms of biological role, divisome-localized glycosyl hydrolase that cleaves peptide-free (denuded) peptidoglycans. The sequence is that of Glycosyl hydrolase DigH from Escherichia coli O157:H7.